We begin with the raw amino-acid sequence, 204 residues long: Somatotropin (204 aa).

The signal sequence occupies residues 1 to 17 (MDRVLLLLSVLSLGVSS). Gln-18 carries the pyrrolidone carboxylic acid modification. Residue His-36 coordinates Zn(2+). Cys-69 and Cys-177 form a disulfide bridge. Glu-186 lines the Zn(2+) pocket. A disulfide bridge connects residues Cys-194 and Cys-202.

This sequence belongs to the somatotropin/prolactin family.

Its subcellular location is the secreted. Its function is as follows. Growth hormone plays an important role in growth control and is involved in the regulation of several anabolic processes. Implicated as an osmoregulatory substance important for seawater adaptation. In Sciaenops ocellatus (Red drum), this protein is Somatotropin (gh).